Consider the following 379-residue polypeptide: Homoserine O-acetyltransferase (379 aa).

Residues Asn-52 to Glu-356 enclose the AB hydrolase-1 domain. Ser-157 functions as the Nucleophile in the catalytic mechanism. Substrate is bound at residue Arg-227. Active-site residues include Asp-320 and His-350. Asp-351 lines the substrate pocket.

Belongs to the AB hydrolase superfamily. MetX family. In terms of assembly, homodimer.

It is found in the cytoplasm. It carries out the reaction L-homoserine + acetyl-CoA = O-acetyl-L-homoserine + CoA. Its pathway is amino-acid biosynthesis; L-methionine biosynthesis via de novo pathway; O-acetyl-L-homoserine from L-homoserine: step 1/1. Transfers an acetyl group from acetyl-CoA to L-homoserine, forming acetyl-L-homoserine. This chain is Homoserine O-acetyltransferase, found in Mycobacterium tuberculosis (strain CDC 1551 / Oshkosh).